The chain runs to 122 residues: Large ribosomal subunit protein uL14 (122 aa).

This sequence belongs to the universal ribosomal protein uL14 family. In terms of assembly, part of the 50S ribosomal subunit. Forms a cluster with proteins L3 and L19. In the 70S ribosome, L14 and L19 interact and together make contacts with the 16S rRNA in bridges B5 and B8.

Binds to 23S rRNA. Forms part of two intersubunit bridges in the 70S ribosome. This Beijerinckia indica subsp. indica (strain ATCC 9039 / DSM 1715 / NCIMB 8712) protein is Large ribosomal subunit protein uL14.